Here is a 356-residue protein sequence, read N- to C-terminus: Branched-chain-amino-acid aminotransferase 6 (356 aa).

Lys199 carries the post-translational modification N6-(pyridoxal phosphate)lysine.

This sequence belongs to the class-IV pyridoxal-phosphate-dependent aminotransferase family. Requires pyridoxal 5'-phosphate as cofactor.

The protein resides in the cytoplasm. The catalysed reaction is L-leucine + 2-oxoglutarate = 4-methyl-2-oxopentanoate + L-glutamate. It catalyses the reaction L-isoleucine + 2-oxoglutarate = (S)-3-methyl-2-oxopentanoate + L-glutamate. It carries out the reaction L-valine + 2-oxoglutarate = 3-methyl-2-oxobutanoate + L-glutamate. It participates in amino-acid biosynthesis; L-isoleucine biosynthesis; L-isoleucine from 2-oxobutanoate: step 4/4. The protein operates within amino-acid biosynthesis; L-leucine biosynthesis; L-leucine from 3-methyl-2-oxobutanoate: step 4/4. It functions in the pathway amino-acid biosynthesis; L-valine biosynthesis; L-valine from pyruvate: step 4/4. Converts 2-oxo acids to branched-chain amino acids. Acts on leucine, isoleucine and valine. The polypeptide is Branched-chain-amino-acid aminotransferase 6 (BCAT6) (Arabidopsis thaliana (Mouse-ear cress)).